The chain runs to 137 residues: MAMTIQLDVVSAEDSIFSGLVQSIQVTGSEGELGVQYGHAPLLTTIKAGMVNVVKQHGEEELIYVAGGVLEVQPGHISVLADTALRAGDLDEQAVLEAKKRLEENIANPSADFEYAEAAAELAETIAQLRLIQKLRK.

This sequence belongs to the ATPase epsilon chain family. F-type ATPases have 2 components, CF(1) - the catalytic core - and CF(0) - the membrane proton channel. CF(1) has five subunits: alpha(3), beta(3), gamma(1), delta(1), epsilon(1). CF(0) has three main subunits: a, b and c.

Its subcellular location is the cell inner membrane. Functionally, produces ATP from ADP in the presence of a proton gradient across the membrane. The protein is ATP synthase epsilon chain of Pseudoalteromonas atlantica (strain T6c / ATCC BAA-1087).